The primary structure comprises 361 residues: Chorismate synthase (361 aa).

2 residues coordinate NADP(+): R48 and R54. FMN is bound by residues R125 to S127, N238 to A239, G278, K293 to S297, and R319.

Belongs to the chorismate synthase family. In terms of assembly, homotetramer. Requires FMNH2 as cofactor.

The enzyme catalyses 5-O-(1-carboxyvinyl)-3-phosphoshikimate = chorismate + phosphate. Its pathway is metabolic intermediate biosynthesis; chorismate biosynthesis; chorismate from D-erythrose 4-phosphate and phosphoenolpyruvate: step 7/7. In terms of biological role, catalyzes the anti-1,4-elimination of the C-3 phosphate and the C-6 proR hydrogen from 5-enolpyruvylshikimate-3-phosphate (EPSP) to yield chorismate, which is the branch point compound that serves as the starting substrate for the three terminal pathways of aromatic amino acid biosynthesis. This reaction introduces a second double bond into the aromatic ring system. The polypeptide is Chorismate synthase (Escherichia coli O157:H7).